Here is a 473-residue protein sequence, read N- to C-terminus: Dol-P-Glc:Glc(2)Man(9)GlcNAc(2)-PP-Dol alpha-1,2-glucosyltransferase (473 aa).

Topologically, residues Met-1–Gly-6 are cytoplasmic. The helical transmembrane segment at Tyr-7–Phe-27 threads the bilayer. The Extracellular portion of the chain corresponds to Ser-28–Thr-64. A helical membrane pass occupies residues Leu-65 to Trp-85. Residues Ser-86–Arg-97 lie on the Cytoplasmic side of the membrane. The chain crosses the membrane as a helical span at residues Phe-98–Val-118. Over Gln-119–Arg-130 the chain is Extracellular. A run of 2 helical transmembrane segments spans residues Val-131–Tyr-151 and Thr-152–His-172. The Extracellular portion of the chain corresponds to Lys-173–Ser-175. A helical transmembrane segment spans residues Ala-176–Cys-196. The Cytoplasmic portion of the chain corresponds to Ala-197–Met-249. A helical transmembrane segment spans residues Leu-250–Val-270. The Extracellular segment spans residues Asn-271–Glu-283. The helical transmembrane segment at Ala-284–Pro-304 threads the bilayer. Over His-305–Arg-323 the chain is Cytoplasmic. A helical membrane pass occupies residues Ile-324–His-344. Residues Lys-345–Glu-367 are Extracellular-facing. Residues Thr-368–Leu-388 form a helical membrane-spanning segment. At Lys-389–Ser-392 the chain is on the cytoplasmic side. A helical transmembrane segment spans residues Ile-393 to Leu-413. At Glu-414–Arg-436 the chain is on the extracellular side. A helical transmembrane segment spans residues Leu-437–Asn-457. The Cytoplasmic segment spans residues Lys-458–Trp-473.

The protein belongs to the ALG10 glucosyltransferase family.

Its subcellular location is the endoplasmic reticulum membrane. The enzyme catalyses an alpha-D-Glc-(1-&gt;3)-alpha-D-Glc-(1-&gt;3)-alpha-D-Man-(1-&gt;2)-alpha-D-Man-(1-&gt;2)-alpha-D-Man-(1-&gt;3)-[alpha-D-Man-(1-&gt;2)-alpha-D-Man-(1-&gt;3)-[alpha-D-Man-(1-&gt;2)-alpha-D-Man-(1-&gt;6)]-alpha-D-Man-(1-&gt;6)]-beta-D-Man-(1-&gt;4)-beta-D-GlcNAc-(1-&gt;4)-alpha-D-GlcNAc-diphospho-di-trans,poly-cis-dolichol + a di-trans,poly-cis-dolichyl beta-D-glucosyl phosphate = a alpha-D-Glc-(1-&gt;2)-alpha-D-Glc-(1-&gt;3)-alpha-D-Glc-(1-&gt;3)-alpha-D-Man-(1-&gt;2)-alpha-D-Man-(1-&gt;2)-alpha-D-Man-(1-&gt;3)-[alpha-D-Man-(1-&gt;2)-alpha-D-Man-(1-&gt;3)-[alpha-D-Man-(1-&gt;2)-alpha-D-Man-(1-&gt;6)]-alpha-D-Man-(1-&gt;6)]-beta-D-Man-(1-&gt;4)-beta-D-GlcNAc-(1-&gt;4)-alpha-D-GlcNAc-diphospho-di-trans,poly-cis-dolichol + a di-trans,poly-cis-dolichyl phosphate + H(+). The protein operates within protein modification; protein glycosylation. Dol-P-Glc:Glc(2)Man(9)GlcNAc(2)-PP-Dol alpha-1,2-glucosyltransferase that operates in the biosynthetic pathway of dolichol-linked oligosaccharides, the glycan precursors employed in protein asparagine (N)-glycosylation. The assembly of dolichol-linked oligosaccharides begins on the cytosolic side of the endoplasmic reticulum membrane and finishes in its lumen. The sequential addition of sugars to dolichol pyrophosphate produces dolichol-linked oligosaccharides containing fourteen sugars, including two GlcNAcs, nine mannoses and three glucoses. Once assembled, the oligosaccharide is transferred from the lipid to nascent proteins by oligosaccharyltransferases. In the lumen of the endoplasmic reticulum, adds the third and last glucose residue from dolichyl phosphate glucose (Dol-P-Glc) onto the lipid-linked oligosaccharide intermediate Glc(2)Man(9)GlcNAc(2)-PP-Dol to produce Glc(3)Man(9)GlcNAc(2)-PP-Dol. This chain is Dol-P-Glc:Glc(2)Man(9)GlcNAc(2)-PP-Dol alpha-1,2-glucosyltransferase, found in Homo sapiens (Human).